Here is an 802-residue protein sequence, read N- to C-terminus: DNA mismatch repair protein MutS (802 aa).

617–624 contacts ATP; sequence GPNMGGKS.

It belongs to the DNA mismatch repair MutS family.

Functionally, this protein is involved in the repair of mismatches in DNA. It is possible that it carries out the mismatch recognition step. This protein has a weak ATPase activity. The polypeptide is DNA mismatch repair protein MutS (Buchnera aphidicola subsp. Acyrthosiphon pisum (strain 5A)).